The following is a 277-amino-acid chain: Release factor glutamine methyltransferase (277 aa).

S-adenosyl-L-methionine-binding positions include 117 to 121 (GTGTG), aspartate 140, tryptophan 168, and asparagine 183. 183–186 (NPPY) provides a ligand contact to substrate.

The protein belongs to the protein N5-glutamine methyltransferase family. PrmC subfamily.

The enzyme catalyses L-glutaminyl-[peptide chain release factor] + S-adenosyl-L-methionine = N(5)-methyl-L-glutaminyl-[peptide chain release factor] + S-adenosyl-L-homocysteine + H(+). Methylates the class 1 translation termination release factors RF1/PrfA and RF2/PrfB on the glutamine residue of the universally conserved GGQ motif. The polypeptide is Release factor glutamine methyltransferase (Shigella flexneri).